A 710-amino-acid chain; its full sequence is Polyribonucleotide nucleotidyltransferase (710 aa).

Asp-491 and Asp-497 together coordinate Mg(2+). The KH domain maps to 558 to 618 (PRIYKIQVKP…SAAQKAIEII (61 aa)). The 69-residue stretch at 628-696 (GRIYMGKVTR…ELGRVRLSRK (69 aa)) folds into the S1 motif domain.

It belongs to the polyribonucleotide nucleotidyltransferase family. Mg(2+) serves as cofactor.

The protein resides in the cytoplasm. It catalyses the reaction RNA(n+1) + phosphate = RNA(n) + a ribonucleoside 5'-diphosphate. Functionally, involved in mRNA degradation. Catalyzes the phosphorolysis of single-stranded polyribonucleotides processively in the 3'- to 5'-direction. The chain is Polyribonucleotide nucleotidyltransferase from Thermodesulfovibrio yellowstonii (strain ATCC 51303 / DSM 11347 / YP87).